The following is a 284-amino-acid chain: Acetyl-coenzyme A carboxylase carboxyl transferase subunit beta (284 aa).

The CoA carboxyltransferase N-terminal domain occupies 25 to 284; sequence MWVKCPGCSA…ILGILYRPAA (260 aa). The Zn(2+) site is built by C29, C32, C48, and C51. The segment at 29-51 adopts a C4-type zinc-finger fold; that stretch reads CPGCSATLLAKDLDANLNVCPTC.

Belongs to the AccD/PCCB family. Acetyl-CoA carboxylase is a heterohexamer composed of biotin carboxyl carrier protein (AccB), biotin carboxylase (AccC) and two subunits each of ACCase subunit alpha (AccA) and ACCase subunit beta (AccD). It depends on Zn(2+) as a cofactor.

The protein localises to the cytoplasm. It catalyses the reaction N(6)-carboxybiotinyl-L-lysyl-[protein] + acetyl-CoA = N(6)-biotinyl-L-lysyl-[protein] + malonyl-CoA. It participates in lipid metabolism; malonyl-CoA biosynthesis; malonyl-CoA from acetyl-CoA: step 1/1. Its function is as follows. Component of the acetyl coenzyme A carboxylase (ACC) complex. Biotin carboxylase (BC) catalyzes the carboxylation of biotin on its carrier protein (BCCP) and then the CO(2) group is transferred by the transcarboxylase to acetyl-CoA to form malonyl-CoA. In Pelobacter propionicus (strain DSM 2379 / NBRC 103807 / OttBd1), this protein is Acetyl-coenzyme A carboxylase carboxyl transferase subunit beta.